The sequence spans 148 residues: 3-hydroxyacyl-[acyl-carrier-protein] dehydratase FabZ (148 aa).

H48 is a catalytic residue.

It belongs to the thioester dehydratase family. FabZ subfamily.

It is found in the cytoplasm. It catalyses the reaction a (3R)-hydroxyacyl-[ACP] = a (2E)-enoyl-[ACP] + H2O. In terms of biological role, involved in unsaturated fatty acids biosynthesis. Catalyzes the dehydration of short chain beta-hydroxyacyl-ACPs and long chain saturated and unsaturated beta-hydroxyacyl-ACPs. The protein is 3-hydroxyacyl-[acyl-carrier-protein] dehydratase FabZ of Nitratiruptor sp. (strain SB155-2).